The following is a 241-amino-acid chain: Large ribosomal subunit protein eL32 (241 aa).

Positions 1–16 are enriched in acidic residues; it reads MADNEEDVEAEEEYTE. 2 disordered regions span residues 1-47 and 68-182; these read MADN…GADQ and VGGL…HPSG. A compositionally biased stretch (basic and acidic residues) spans 29 to 44; the sequence is ESLREAGFESVEDVRG. A compositionally biased stretch (acidic residues) spans 73-96; it reads VESETEAEVEEEGGEEAPDEDVET. The span at 103–116 shows a compositional bias: basic and acidic residues; the sequence is LTEKTPDLSDEDAR. The span at 133–159 shows a compositional bias: basic residues; the sequence is DHHKKKRVSTSWRKPRGQLSKQRRGIK.

It belongs to the eukaryotic ribosomal protein eL32 family. In terms of assembly, part of the 50S ribosomal subunit. Interacts weakly with protein L15.

In terms of biological role, binds to the 23S rRNA. This is Large ribosomal subunit protein eL32 (rpl32e) from Haloarcula marismortui (strain ATCC 43049 / DSM 3752 / JCM 8966 / VKM B-1809) (Halobacterium marismortui).